Consider the following 355-residue polypeptide: Chorismate synthase (355 aa).

R48 is an NADP(+) binding site. FMN is bound by residues 125 to 127 (RSS), 238 to 239 (NA), G278, 293 to 297 (KPASS), and R319.

This sequence belongs to the chorismate synthase family. As to quaternary structure, homotetramer. It depends on FMNH2 as a cofactor.

The catalysed reaction is 5-O-(1-carboxyvinyl)-3-phosphoshikimate = chorismate + phosphate. It functions in the pathway metabolic intermediate biosynthesis; chorismate biosynthesis; chorismate from D-erythrose 4-phosphate and phosphoenolpyruvate: step 7/7. In terms of biological role, catalyzes the anti-1,4-elimination of the C-3 phosphate and the C-6 proR hydrogen from 5-enolpyruvylshikimate-3-phosphate (EPSP) to yield chorismate, which is the branch point compound that serves as the starting substrate for the three terminal pathways of aromatic amino acid biosynthesis. This reaction introduces a second double bond into the aromatic ring system. In Baumannia cicadellinicola subsp. Homalodisca coagulata, this protein is Chorismate synthase.